A 271-amino-acid polypeptide reads, in one-letter code: Extent of cell elongation protein 1 (271 aa).

The first 18 residues, 1-18 (MKFSKIACATVFALSSQA), serve as a signal peptide directing secretion. The chain crosses the membrane as a helical span at residues 62–82 (SIIGIIMGILGNIPQVIQIIM).

Polymerizes in solution to form membrane pores. In terms of processing, cleavage by KEX2 generates 8 peptides ECE1-I to ECE1-VIII, all terminating in Lys-Arg. Only peptide ECE1-III, called candidalysin, shows toxin activity.

The protein resides in the secreted. Its subcellular location is the host cell membrane. Functionally, secreted protein cleaved by KEX2 in 8 similar peptides (ECE1-I to ECE1-VIII). Stimulates biofilm formation. Acts as a cytolytic peptide toxin that directly damages host epithelial membranes, triggers a danger response signaling pathway and activates epithelial immunity. Polymerizes in solution to form membrane pores to damage epithelial cells. Induces calcium influx, oxidative stress, mitochondrial dysfunction and ATP depletion in host cells, leading to epithelial necrosis. Serves as a danger signal that potentiates the immune response, and more specifically IL-17 response. Induces cytokine/chemokine secretion by host (especially CCL2/3/4, CXCL1 and S100A8), neutrophil recruitment, and promotes mortality in zebrafish and murine models of systemic fungal infection. Mediates distinct epithelial inflammatory responses through p38, EGFR-ERK and TREM-1/DAP12 pathways. Acts as one of the hypha-derived drivers of NLRP3 inflammasome responses in primary macrophages and thus contributes to the capacity to induce maturation and secretion of IL-1beta from primary macrophages. Stimulates mast cells by mediating cross-talk between signaling pathways activated by the dectin-1 receptor and MAPKs. Enables escape via the gasdermin-mediated pyroptosis, as well as a cell lysis pathway associated with macrophage extracellular trap formation termed ETosis. Acts as the main hemolytic factor of C.albicans. As an exotoxine, also promotes alcohol-associated liver disease or oral carcinogenesis. The polypeptide is Extent of cell elongation protein 1 (Candida albicans (strain SC5314 / ATCC MYA-2876) (Yeast)).